We begin with the raw amino-acid sequence, 241 residues long: Octanoyltransferase (241 aa).

A BPL/LPL catalytic domain is found at 49–233 (GEASELVWLL…AFGEVFGPSE (185 aa)). Substrate-binding positions include 87-94 (RGGQVTYH), 162-164 (AIG), and 175-177 (GIS). The Acyl-thioester intermediate role is filled by Cys193.

The protein belongs to the LipB family.

It is found in the cytoplasm. It carries out the reaction octanoyl-[ACP] + L-lysyl-[protein] = N(6)-octanoyl-L-lysyl-[protein] + holo-[ACP] + H(+). It participates in protein modification; protein lipoylation via endogenous pathway; protein N(6)-(lipoyl)lysine from octanoyl-[acyl-carrier-protein]: step 1/2. In terms of biological role, catalyzes the transfer of endogenously produced octanoic acid from octanoyl-acyl-carrier-protein onto the lipoyl domains of lipoate-dependent enzymes. Lipoyl-ACP can also act as a substrate although octanoyl-ACP is likely to be the physiological substrate. This is Octanoyltransferase from Nitrobacter hamburgensis (strain DSM 10229 / NCIMB 13809 / X14).